The following is a 118-amino-acid chain: Holo-[acyl-carrier-protein] synthase (118 aa).

Asp-8 and Glu-60 together coordinate Mg(2+).

The protein belongs to the P-Pant transferase superfamily. AcpS family. Mg(2+) serves as cofactor.

The protein resides in the cytoplasm. It catalyses the reaction apo-[ACP] + CoA = holo-[ACP] + adenosine 3',5'-bisphosphate + H(+). Its function is as follows. Transfers the 4'-phosphopantetheine moiety from coenzyme A to a Ser of acyl-carrier-protein. This Wolbachia sp. subsp. Drosophila simulans (strain wRi) protein is Holo-[acyl-carrier-protein] synthase.